A 374-amino-acid chain; its full sequence is Actin-related protein 2/3 complex subunit 2B (374 aa).

Belongs to the ARPC2 family. As to quaternary structure, component of the Arp2/3 complex composed of ARP2, ARP3, ARPC1/p41-ARC, ARPC2/p34-ARC, ARPC3/p21-ARC, ARPC4/p20-ARC and ARPC5/p16-ARC. As to expression, expressed at low levels in all tissues with a relatively highest expression in inflorescences.

The protein resides in the cytoplasm. It localises to the cytoskeleton. It is found in the cell projection. In terms of biological role, functions as actin-binding component of the Arp2/3 complex which is involved in regulation of actin polymerization and together with an activating nucleation-promoting factor (NPF) mediates the formation of branched actin networks. Seems to contact the mother actin filament. Arp2/3 complex plays a critical role in the control of cell morphogenesis via the modulation of cell polarity development. The sequence is that of Actin-related protein 2/3 complex subunit 2B (ARPC2B) from Arabidopsis thaliana (Mouse-ear cress).